Reading from the N-terminus, the 151-residue chain is Large ribosomal subunit protein uL13 (151 aa).

A disordered region spans residues Tyr126–Arg151. A compositionally biased stretch (basic and acidic residues) spans His131 to Lys140.

Belongs to the universal ribosomal protein uL13 family. Part of the 50S ribosomal subunit.

Its function is as follows. This protein is one of the early assembly proteins of the 50S ribosomal subunit, although it is not seen to bind rRNA by itself. It is important during the early stages of 50S assembly. The chain is Large ribosomal subunit protein uL13 from Trichodesmium erythraeum (strain IMS101).